The sequence spans 89 residues: Probable Fe(2+)-trafficking protein (89 aa).

Belongs to the Fe(2+)-trafficking protein family.

Functionally, could be a mediator in iron transactions between iron acquisition and iron-requiring processes, such as synthesis and/or repair of Fe-S clusters in biosynthetic enzymes. This is Probable Fe(2+)-trafficking protein from Hahella chejuensis (strain KCTC 2396).